The following is a 113-amino-acid chain: B-type lectin plumieribetin (113 aa).

Positions 1-109 constitute a Bulb-type lectin domain; that stretch reads NYLSKNDELR…STEIWNSDKN (109 aa).

Homotetramer. Interacts with alpha-1-beta-1 integrin (ITGA1/ITGB1). Not glycosylated. Not N-glycosylated and not O-glycosylated with the mostcommon O-linked glycoconjugates. Post-translationally, the N-terminus is blocked. In terms of tissue distribution, expressed by sting venom glands and is also found in skin mucus. Not found in other tissues tested.

It is found in the secreted. May contribute to some of the local and systemic effects of envenomation by the scorpionfish. Preferentially recognizes mannose-containing carbohydrate structures, but its interaction with single mannose residues is weak. Potently inhibits alpha-1-beta-1 integrin (ITGA1/ITGB1) binding to basement membrane collagen IV in a divalent cation-independent manner. In addition, moderately inhibits both laminin binding integrins alpha-3-beta-1 (ITGA3/ITGB1) and alpha-7-beta-1 (ITGA7/ITGB1). Weakens the cell-collagen contacts, reduces cell spreading, and alters the actin cytoskeleton, after the compensating alpha-2-beta-1 integrin is blocked. On the cellular level, fails to completely detach hepatocarcinoma HepG2 cells and primary arterial smooth muscle cells from the collagen IV fragment CB3. This Scorpaena plumieri (Spotted scorpionfish) protein is B-type lectin plumieribetin.